The following is a 502-amino-acid chain: Exodeoxyribonuclease 7 large subunit (502 aa).

Residues 474–495 (SAPSTTKKSAPKPAAPKAPKTP) are compositionally biased toward low complexity. The interval 474-502 (SAPSTTKKSAPKPAAPKAPKTPGEQGSLF) is disordered.

It belongs to the XseA family. Heterooligomer composed of large and small subunits.

Its subcellular location is the cytoplasm. The enzyme catalyses Exonucleolytic cleavage in either 5'- to 3'- or 3'- to 5'-direction to yield nucleoside 5'-phosphates.. In terms of biological role, bidirectionally degrades single-stranded DNA into large acid-insoluble oligonucleotides, which are then degraded further into small acid-soluble oligonucleotides. The chain is Exodeoxyribonuclease 7 large subunit from Ruegeria sp. (strain TM1040) (Silicibacter sp.).